We begin with the raw amino-acid sequence, 241 residues long: Pyridoxine 5'-phosphate synthase (241 aa).

N7 lines the 3-amino-2-oxopropyl phosphate pocket. 9 to 10 (DH) lines the 1-deoxy-D-xylulose 5-phosphate pocket. 3-amino-2-oxopropyl phosphate is bound at residue R18. The active-site Proton acceptor is the H43. 2 residues coordinate 1-deoxy-D-xylulose 5-phosphate: R45 and H50. E70 (proton acceptor) is an active-site residue. Residue T100 coordinates 1-deoxy-D-xylulose 5-phosphate. H191 serves as the catalytic Proton donor. Residues G192 and 213-214 (GH) each bind 3-amino-2-oxopropyl phosphate.

It belongs to the PNP synthase family. As to quaternary structure, homooctamer; tetramer of dimers.

It is found in the cytoplasm. The catalysed reaction is 3-amino-2-oxopropyl phosphate + 1-deoxy-D-xylulose 5-phosphate = pyridoxine 5'-phosphate + phosphate + 2 H2O + H(+). It functions in the pathway cofactor biosynthesis; pyridoxine 5'-phosphate biosynthesis; pyridoxine 5'-phosphate from D-erythrose 4-phosphate: step 5/5. In terms of biological role, catalyzes the complicated ring closure reaction between the two acyclic compounds 1-deoxy-D-xylulose-5-phosphate (DXP) and 3-amino-2-oxopropyl phosphate (1-amino-acetone-3-phosphate or AAP) to form pyridoxine 5'-phosphate (PNP) and inorganic phosphate. This chain is Pyridoxine 5'-phosphate synthase, found in Nitratidesulfovibrio vulgaris (strain ATCC 29579 / DSM 644 / CCUG 34227 / NCIMB 8303 / VKM B-1760 / Hildenborough) (Desulfovibrio vulgaris).